The chain runs to 271 residues: Dermonecrotic toxin LhSicTox-alphaIA2aiv (271 aa).

His3 is an active-site residue. 2 residues coordinate Mg(2+): Glu23 and Asp25. His39 (nucleophile) is an active-site residue. Cystine bridges form between Cys43/Cys49 and Cys45/Cys188. Asp83 is a binding site for Mg(2+).

The protein belongs to the arthropod phospholipase D family. Class II subfamily. It depends on Mg(2+) as a cofactor. Expressed by the venom gland.

It is found in the secreted. The catalysed reaction is an N-(acyl)-sphingosylphosphocholine = an N-(acyl)-sphingosyl-1,3-cyclic phosphate + choline. It carries out the reaction an N-(acyl)-sphingosylphosphoethanolamine = an N-(acyl)-sphingosyl-1,3-cyclic phosphate + ethanolamine. The enzyme catalyses a 1-acyl-sn-glycero-3-phosphocholine = a 1-acyl-sn-glycero-2,3-cyclic phosphate + choline. It catalyses the reaction a 1-acyl-sn-glycero-3-phosphoethanolamine = a 1-acyl-sn-glycero-2,3-cyclic phosphate + ethanolamine. Dermonecrotic toxins cleave the phosphodiester linkage between the phosphate and headgroup of certain phospholipids (sphingolipid and lysolipid substrates), forming an alcohol (often choline) and a cyclic phosphate. This toxin acts on sphingomyelin (SM). It may also act on ceramide phosphoethanolamine (CPE), lysophosphatidylcholine (LPC) and lysophosphatidylethanolamine (LPE), but not on lysophosphatidylserine (LPS), and lysophosphatidylglycerol (LPG). It acts by transphosphatidylation, releasing exclusively cyclic phosphate products as second products. Induces dermonecrosis, hemolysis, increased vascular permeability, edema, inflammatory response, and platelet aggregation. In Loxosceles hirsuta (Recluse spider), this protein is Dermonecrotic toxin LhSicTox-alphaIA2aiv.